The primary structure comprises 421 residues: MSKLTIVRGFNDVLPLDSYKWQFLESKVKLILDRYNYSETRLPIVERSELFHRSVGESSDIVSKETYDFQDRNGDSLTLRPEGTAGCVRMVIENNLATRGQTQKLWYCGPMFRYERPQKGRYRQFYQLGVEAYGFDGIAIDLEVIAIAWSLFKELGISEYVTLELNSLGSSLNRQEYTQALLQYLKPYHAELDEDSIKRLDKNPLRILDSKIEKTQKILANAPKLMDFIDHDLRLRFKQTCQYLDALGVRYKLNENLVRGLDYYTGLVFEWTTDKLGSQSAICAGGRYDGLVENLGGQKTAAIGFAIGMERLLLLLEDLGKLPNQDNACDVFFILDSAQLHQSLAIVENIRQELPQLKIDMDLKFGSFKSQFKKADKSGAKVAIIIGQDELDNGFAGIKFLQQNEEQQQVAFNELINFLER.

Belongs to the class-II aminoacyl-tRNA synthetase family. Homodimer.

Its subcellular location is the cytoplasm. It catalyses the reaction tRNA(His) + L-histidine + ATP = L-histidyl-tRNA(His) + AMP + diphosphate + H(+). The sequence is that of Histidine--tRNA ligase from Francisella tularensis subsp. novicida (strain U112).